A 219-amino-acid chain; its full sequence is MVKLLPAQEAAKIYHTNYVRNSRAVGVMWGTLTICFSVLVMALFIQPYWIGDSVSTPQAGYFGLFSYCVGNVLSSELICKGGPLDFSSIPSRAFKTAMFFVALAMFLIIGSIICFSLFFVCNTATVYKICAWMQLAAATGLMIGCLVYPDGWDSSEVRRMCGEQTGKYTLGHCTIRWAFMLAILSIGDALILSFLAFVLGYRQDKLLPDDYKADGNEEV.

The Cytoplasmic segment spans residues 1 to 24 (MVKLLPAQEAAKIYHTNYVRNSRA). Residues 25–45 (VGVMWGTLTICFSVLVMALFI) traverse the membrane as a helical segment. Residues 46–98 (QPYWIGDSVSTPQAGYFGLFSYCVGNVLSSELICKGGPLDFSSIPSRAFKTAM) are Extracellular-facing. A helical membrane pass occupies residues 99-119 (FFVALAMFLIIGSIICFSLFF). Over 120-128 (VCNTATVYK) the chain is Cytoplasmic. The chain crosses the membrane as a helical span at residues 129–149 (ICAWMQLAAATGLMIGCLVYP). Topologically, residues 150-178 (DGWDSSEVRRMCGEQTGKYTLGHCTIRWA) are extracellular. The helical transmembrane segment at 179–199 (FMLAILSIGDALILSFLAFVL) threads the bilayer. The Cytoplasmic portion of the chain corresponds to 200–219 (GYRQDKLLPDDYKADGNEEV).

The protein belongs to the LHFP family. As to quaternary structure, forms the MET channel composed of TMC (TMC1 or TMC2), TMIE, TOMT, CIB (CIB2 or CIB3), LHPL5 and PCDH15. Interaction with PCDH15 is required for efficient localization to hair bundles.

The protein resides in the cell membrane. Its function is as follows. Auxiliary subunit of the mechanotransducer (MET) non-specific cation channel complex located at the tips of the shorter stereocilia of cochlear hair cells and that mediates sensory transduction in the auditory system. The MET complex is composed of two dimeric pore-forming ion-conducting transmembrane TMC (TMC1 or TMC2) subunits, and aided by several auxiliary proteins including LHFPL5, TMIE, CIB2/3 and TOMT, and the tip-link PCDH15. Functionally couples PCDH15 to the transduction channel. The sequence is that of LHFPL tetraspan subfamily member 5 protein from Rattus norvegicus (Rat).